The sequence spans 789 residues: Phenylalanine--tRNA ligase beta subunit (789 aa).

Residues 38-151 (KKHLQSFVVV…NTYNVGESFF (114 aa)) form the tRNA-binding domain. In terms of domain architecture, B5 spans 398-474 (HNDILLNFSP…RLYGYDKILE (77 aa)). Mg(2+) is bound by residues Asp452, Asp458, Glu461, and Glu462. The 94-residue stretch at 694 to 787 (LRYQSVKRDF…ISKGFNGILR (94 aa)) folds into the FDX-ACB domain.

The protein belongs to the phenylalanyl-tRNA synthetase beta subunit family. Type 1 subfamily. As to quaternary structure, tetramer of two alpha and two beta subunits. Mg(2+) is required as a cofactor.

The protein resides in the cytoplasm. The enzyme catalyses tRNA(Phe) + L-phenylalanine + ATP = L-phenylalanyl-tRNA(Phe) + AMP + diphosphate + H(+). This Ehrlichia ruminantium (strain Gardel) protein is Phenylalanine--tRNA ligase beta subunit.